A 120-amino-acid polypeptide reads, in one-letter code: Large ribosomal subunit protein eL8 (120 aa).

The protein belongs to the eukaryotic ribosomal protein eL8 family. Part of the 50S ribosomal subunit. Probably part of the RNase P complex.

The protein localises to the cytoplasm. In terms of biological role, multifunctional RNA-binding protein that recognizes the K-turn motif in ribosomal RNA, the RNA component of RNase P, box H/ACA, box C/D and box C'/D' sRNAs. The sequence is that of Large ribosomal subunit protein eL8 from Natronomonas pharaonis (strain ATCC 35678 / DSM 2160 / CIP 103997 / JCM 8858 / NBRC 14720 / NCIMB 2260 / Gabara) (Halobacterium pharaonis).